The chain runs to 124 residues: Small ribosomal subunit protein bS6 (124 aa).

This sequence belongs to the bacterial ribosomal protein bS6 family.

Binds together with bS18 to 16S ribosomal RNA. The polypeptide is Small ribosomal subunit protein bS6 (Rippkaea orientalis (strain PCC 8801 / RF-1) (Cyanothece sp. (strain PCC 8801))).